The sequence spans 152 residues: UPF0266 membrane protein YobD (152 aa).

Transmembrane regions (helical) follow at residues 6–26, 45–65, and 67–87; these read LVLI…QFIM, IDSV…VTNH, and AQIT…IFWI.

This sequence belongs to the UPF0266 family.

It localises to the cell inner membrane. In Escherichia fergusonii (strain ATCC 35469 / DSM 13698 / CCUG 18766 / IAM 14443 / JCM 21226 / LMG 7866 / NBRC 102419 / NCTC 12128 / CDC 0568-73), this protein is UPF0266 membrane protein YobD.